Consider the following 235-residue polypeptide: uncharacterized protein (235 aa).

Disordered regions lie at residues 1–36 (MGML…GRGS) and 213–235 (VKTR…ILEQ).

This is an uncharacterized protein from Homo sapiens (Human).